Here is a 175-residue protein sequence, read N- to C-terminus: Transcription factor E (175 aa).

An HTH TFE/IIEalpha-type domain is found at 3–88 (ENPLIQQVLF…TWKPSLEKVP (86 aa)).

The protein belongs to the TFE family. In terms of assembly, monomer. Interaction with RNA polymerase subunits RpoF and RpoE is necessary for Tfe stimulatory transcription activity. Able to interact with Tbp and RNA polymerase in the absence of DNA promoter. Interacts both with the preinitiation and elongation complexes.

Its function is as follows. Transcription factor that plays a role in the activation of archaeal genes transcribed by RNA polymerase. Facilitates transcription initiation by enhancing TATA-box recognition by TATA-box-binding protein (Tbp), and transcription factor B (Tfb) and RNA polymerase recruitment. Not absolutely required for transcription in vitro, but particularly important in cases where Tbp or Tfb function is not optimal. It dynamically alters the nucleic acid-binding properties of RNA polymerases by stabilizing the initiation complex and destabilizing elongation complexes. Seems to translocate with the RNA polymerase following initiation and acts by binding to the non template strand of the transcription bubble in elongation complexes. The sequence is that of Transcription factor E from Methanococcus maripaludis (strain DSM 14266 / JCM 13030 / NBRC 101832 / S2 / LL).